We begin with the raw amino-acid sequence, 208 residues long: Phomoidride biosynthesis cluster protein B (208 aa).

The protein belongs to the tstB family.

Phosphatidylethanolamine-binding protein; part of the gene cluster that mediates the biosynthesis of the antihypercholesterolemic agents phomoidrides which are dimeric anhydrides. Within the pathway, phiB is not essential for dimerization and its function has still to be determined. The pathway begins with the highly reducing polyketide synthase phiA that catalyzes the formation of a C12-fatty acyl-ACP, starting from one acetate and 5 malonate units. The hydrolase phiM is involved in the release of the C12-fatty acyl chain from phiA. The alkylcitrate synthase (ACS) phiJ and the alkylcitrate dehydratase (ACDH) phiI then give rise to decarboxylated monomeric anhydrides by coupling the C12-fatty acyl chain with oxalacetic acid. The cyclase phiC is responsible for the dimerization of the monomeric anhydrides which leads to the production of prephomoidride that contains the characteristic bicyclo[4.3.1]deca-1,6-diene system of phomoidrides. Iterative oxidation catalyzed by the alpha-ketoglutarate-dependent dioxygenase phiK produced then phomoidride A. Finally, the methyltransferase phiE converts phomoidride A to phomoidride B via an acetalization reaction. The phosphatidylethanolamine-binding protein phiB and phiN are not essential for dimerization and their functions have still to be determined. The polypeptide is Phomoidride biosynthesis cluster protein B (Fungal sp. (strain ATCC 74256)).